The primary structure comprises 312 residues: 4-diphosphocytidyl-2-C-methyl-D-erythritol kinase (312 aa).

Residue Lys-10 is part of the active site. Position 105–115 (105–115 (PVAGGMAGGSA)) interacts with ATP. Residue Asp-146 is part of the active site.

This sequence belongs to the GHMP kinase family. IspE subfamily.

It carries out the reaction 4-CDP-2-C-methyl-D-erythritol + ATP = 4-CDP-2-C-methyl-D-erythritol 2-phosphate + ADP + H(+). It participates in isoprenoid biosynthesis; isopentenyl diphosphate biosynthesis via DXP pathway; isopentenyl diphosphate from 1-deoxy-D-xylulose 5-phosphate: step 3/6. Functionally, catalyzes the phosphorylation of the position 2 hydroxy group of 4-diphosphocytidyl-2C-methyl-D-erythritol. The sequence is that of 4-diphosphocytidyl-2-C-methyl-D-erythritol kinase from Corynebacterium glutamicum (strain R).